An 851-amino-acid polypeptide reads, in one-letter code: DNA mismatch repair protein MutS (851 aa).

Residue Gly-602 to Ser-609 participates in ATP binding.

It belongs to the DNA mismatch repair MutS family.

In terms of biological role, this protein is involved in the repair of mismatches in DNA. It is possible that it carries out the mismatch recognition step. This protein has a weak ATPase activity. In Streptococcus pyogenes serotype M49 (strain NZ131), this protein is DNA mismatch repair protein MutS.